Consider the following 407-residue polypeptide: Inhibin beta B chain (407 aa).

A signal peptide spans 1 to 28 (MDGLPGRALGAACLLLLAAGWLGPEAWG). The tract at residues 26-62 (AWGSPTPPPTPAAPPPPPPPGSPGGSQDTCTSCGGFR) is disordered. Residues 29-292 (SPTPPPTPAA…GDSRHRIRKR (264 aa)) constitute a propeptide that is removed on maturation. Pro residues predominate over residues 30-47 (PTPPPTPAAPPPPPPPGS). Asparagine 93 carries N-linked (GlcNAc...) asparagine glycosylation. Intrachain disulfides connect cysteine 296-cysteine 304, cysteine 303-cysteine 372, cysteine 332-cysteine 404, and cysteine 336-cysteine 406.

This sequence belongs to the TGF-beta family. Dimeric, linked by one or more disulfide bonds. Inhibin B is a dimer of alpha and beta-B. Activin B is a homodimer of beta-B. Activin AB is a dimer of beta-A and beta-B. Interacts with FST and FSTL3. Activin B interacts with BMPR2.

The protein localises to the secreted. Its function is as follows. Inhibins and activins inhibit and activate, respectively, the secretion of follitropin by the pituitary gland. Inhibins/activins are involved in regulating a number of diverse functions such as hypothalamic and pituitary hormone secretion, gonadal hormone secretion, germ cell development and maturation, erythroid differentiation, insulin secretion, nerve cell survival, embryonic axial development or bone growth, depending on their subunit composition. Inhibins appear to oppose the functions of activins. Functionally, activin B is a dimer of alpha and beta-B that plays a role in several essential biological processes including embryonic development, stem cell maintenance and differentiation, haematopoiesis, cell proliferation and wound healing. Signals through type I receptor ACVR1C, abundantly expressed in pancreatic beta cells, and type II receptors like ACVR2A or BMPR2. Upon ligand binding, these receptors phosphorylate intracellular signaling mediators SMAD2 and SMAD3, which form a complex with SMAD4, translocate to the nucleus, and regulate gene expression. Plays a crucial role in the induction of hepcidin by inflammation through activation of ACVR1C and subsequent phosphorylation of SMAD1/5/8. Regulates adipocyte lipid metabolism by decreasing non-esterified fatty acids and glycerol release and increases intracellular triglyceride content. Stimulates wound healing by promoting cell migration and hair follicle regeneration through the JNK and ERK signaling pathways downstream of RHOA. In terms of biological role, inhibin B is a dimer of alpha and beta-B that plays a crucial role in the regulation of the reproductive system by inhibiting the secretion of follicle-stimulating hormone (FSH) from the anterior pituitary gland. Thereby, maintains reproductive homeostasis in both males and females. Acts as a more potent suppressor of FSH release than inhibin A. Functions as competitive receptor antagonist binding activin type II receptors with high affinity in the presence of the TGF-beta type III coreceptor/TGFBR3L. The chain is Inhibin beta B chain (INHBB) from Homo sapiens (Human).